Consider the following 41-residue polypeptide: Urotensin-1 (41 aa).

Val41 carries the valine amide modification.

Belongs to the sauvagine/corticotropin-releasing factor/urotensin I family.

It localises to the secreted. Its function is as follows. Urotensin is found in the teleost caudal neurosecretory system. It has a suggested role in osmoregulation and as a corticotropin-releasing factor. In Catostomus commersonii (White sucker), this protein is Urotensin-1.